The primary structure comprises 589 residues: Deoxynucleoside triphosphate triphosphohydrolase SAMHD1 (589 aa).

N-acetylmethionine is present on Met1. Over residues 1–10 (MQSADSQNTP) the composition is skewed to polar residues. A disordered region spans residues 1–41 (MQSADSQNTPKRPRRDGSPRTPPDSPLADAETSPSHDLDPD). Ser18 carries the post-translational modification Phosphoserine. Thr21 bears the Phosphothreonine mark. Phosphoserine occurs at positions 33 and 88. In terms of domain architecture, SAM spans 45-100 (WGPEQVWSFLRRCGFSDSELLKRCREKRMSGSLLPFPEDLGISSHGKKMKLLNCIQ). Lys104 and Val105 together coordinate GTP. Asn107 contacts dGTP. Residues Asp125, Gln130, and Arg133 each contribute to the GTP site. 4 residues coordinate dGTP: Gln137, Leu138, Val144, and Arg152. Gln137 is a binding site for dATP. Gln137 contacts dCTP. Residue Gln137 coordinates dTTP. Arg152 provides a ligand contact to dATP. DCTP is bound at residue Arg152. Arg152 is a binding site for dTTP. The 126-residue stretch at 152-277 (RFEHSLGVGY…IKDASKWLYK (126 aa)) folds into the HD domain. Mn(2+) contacts are provided by His155, His194, and Asp195. Residues His198 and His203 each contribute to the dATP site. Residues His198 and His203 each contribute to the dCTP site. Positions 198 and 203 each coordinate dTTP. The active site involves His221. Asp300 contacts Mn(2+). 12 residues coordinate dGTP: Lys301, Tyr304, Asp308, Arg322, Arg341, Lys343, Asn347, Arg355, Tyr363, Gln364, His365, and Lys366. DATP contacts are provided by Lys301, Tyr304, and Asp308. Positions 301, 304, and 308 each coordinate dCTP. DTTP is bound by residues Lys301, Tyr304, and Asp308. Arg355 lines the dATP pocket. Arg355 serves as a coordination point for dCTP. Gln364 is a binding site for dATP. Gln364 is a dCTP binding site. DTTP is bound at residue Gln364. GTP contacts are provided by Arg440 and Lys444. Residue Lys457 forms a Glycyl lysine isopeptide (Lys-Gly) (interchain with G-Cter in SUMO2) linkage. A GTP-binding site is contributed by Lys512. Residue Lys512 coordinates dGTP.

This sequence belongs to the SAMHD1 family. Homodimer; in absence of GTP and dNTP. Homotetramer; in GTP- and dNTP-bound form. Interacts with MRE11; leading to stimulate the exonuclease activity of MRE11. Interacts with RBBP8/CtIP. Interacts (via its C-terminus) with CD81. It depends on Zn(2+) as a cofactor.

It is found in the nucleus. The protein localises to the chromosome. It catalyses the reaction a 2'-deoxyribonucleoside 5'-triphosphate + H2O = a 2'-deoxyribonucleoside + triphosphate + H(+). It carries out the reaction dATP + H2O = 2'-deoxyadenosine + triphosphate + H(+). The catalysed reaction is dCTP + H2O = 2'-deoxycytidine + triphosphate + H(+). The enzyme catalyses dGTP + H2O = 2'-deoxyguanosine + triphosphate + H(+). It catalyses the reaction dTTP + H2O = thymidine + triphosphate + H(+). Allosterically activated and regulated via the combined actions of GTP and dNTPs (dATP, dGTP, dTTP and dCTP): Allosteric site 1 binds GTP, while allosteric site 2 binds dNTP. Allosteric activation promotes the formation of highly active homotetramers. Its function is as follows. Protein that acts both as a host restriction factor involved in defense response to virus and as a regulator of DNA end resection at stalled replication forks. Has deoxynucleoside triphosphate (dNTPase) activity, which is required to restrict infection by viruses: dNTPase activity reduces cellular dNTP levels to levels too low for retroviral reverse transcription to occur, blocking early-stage virus replication in dendritic and other myeloid cells. Likewise, suppresses LINE-1 retrotransposon activity. In addition to virus restriction, dNTPase activity acts as a regulator of DNA precursor pools by regulating dNTP pools. Functions during S phase at stalled DNA replication forks to promote the resection of gapped or reversed forks: acts by stimulating the exonuclease activity of MRE11, activating the ATR-CHK1 pathway and allowing the forks to restart replication. Its ability to promote degradation of nascent DNA at stalled replication forks is required to prevent induction of type I interferons, thereby preventing chronic inflammation. Ability to promote DNA end resection at stalled replication forks is independent of dNTPase activity. Enhances immunoglobulin hypermutation in B-lymphocytes by promoting transversion mutation. This is Deoxynucleoside triphosphate triphosphohydrolase SAMHD1 from Bos taurus (Bovine).